Reading from the N-terminus, the 180-residue chain is Interleukin-17B (180 aa).

The signal sequence occupies residues 1–20; that stretch reads MDWPHNLLFLLTISIFLGLG. Residues 22–44 form a disordered region; sequence PRSPKSKRKGQGRPGPLAPGPHQ. An N-linked (GlcNAc...) asparagine glycan is attached at N75. Cystine bridges form between C121–C176 and C126–C178.

Belongs to the IL-17 family. In terms of tissue distribution, expressed in adult pancreas, small intestine, stomach, spinal cord and testis. Less pronounced expression in prostate, colon mucosal lining, and ovary.

The protein resides in the secreted. Its function is as follows. Stimulates the release of tumor necrosis factor alpha and IL-1-beta from the monocytic cell line THP-1. The protein is Interleukin-17B (IL17B) of Homo sapiens (Human).